A 581-amino-acid polypeptide reads, in one-letter code: Proline--tRNA ligase (581 aa).

It belongs to the class-II aminoacyl-tRNA synthetase family. ProS type 1 subfamily. As to quaternary structure, homodimer.

It localises to the cytoplasm. The catalysed reaction is tRNA(Pro) + L-proline + ATP = L-prolyl-tRNA(Pro) + AMP + diphosphate. Catalyzes the attachment of proline to tRNA(Pro) in a two-step reaction: proline is first activated by ATP to form Pro-AMP and then transferred to the acceptor end of tRNA(Pro). As ProRS can inadvertently accommodate and process non-cognate amino acids such as alanine and cysteine, to avoid such errors it has two additional distinct editing activities against alanine. One activity is designated as 'pretransfer' editing and involves the tRNA(Pro)-independent hydrolysis of activated Ala-AMP. The other activity is designated 'posttransfer' editing and involves deacylation of mischarged Ala-tRNA(Pro). The misacylated Cys-tRNA(Pro) is not edited by ProRS. This is Proline--tRNA ligase from Rhodococcus opacus (strain B4).